We begin with the raw amino-acid sequence, 641 residues long: DNA mismatch repair protein MutL (641 aa).

Residues 345-445 are disordered; sequence PAAVAPPAPA…GDTSLGDTSP (101 aa). Over residues 419–429 the composition is skewed to basic and acidic residues; it reads PRTEPATRTGE. Polar residues predominate over residues 432-442; that stretch reads GISSGDTSLGD.

Belongs to the DNA mismatch repair MutL/HexB family.

This protein is involved in the repair of mismatches in DNA. It is required for dam-dependent methyl-directed DNA mismatch repair. May act as a 'molecular matchmaker', a protein that promotes the formation of a stable complex between two or more DNA-binding proteins in an ATP-dependent manner without itself being part of a final effector complex. The protein is DNA mismatch repair protein MutL of Azotobacter vinelandii (strain DJ / ATCC BAA-1303).